A 147-amino-acid polypeptide reads, in one-letter code: HETDPDGQVMSSMIETLMFLQKEYANLRYAFMTVNNARSFGSGSERLYVSNKEIKTFEPLKEICEEAGGHIPSPQLENQNKAFASVLERHNKAAYLVVGDSANFTNWAAGQPNEADGTCVKADTHGSWHSASCDENLLVVCEFYFIL.

Residues 62 to 143 (EICEEAGGHI…DENLLVVCEF (82 aa)) form the C-type lectin domain. Disulfide bonds link Cys64-Cys141 and Cys119-Cys133. An N-linked (GlcNAc...) asparagine glycan is attached at Asn103.

Belongs to the alpha-type phospholipase A2 inhibitor family. Homo- or heterotrimer; homotrimer of PLI-A chains, two PLI-A and one PLI-B chains, one PLI-A and two PLI-B chains, and homotrimer of PLI-B chains (with a ratio of 1:3:3:1). Expressed by the liver.

The protein localises to the secreted. In terms of biological role, PLI binds directly phospholipase A2 in the presence or absence of calcium. Inhibitory activity of the PLI-A homotrimer is more specific than that of the PLI-B homotrimer. The protein is Phospholipase A2 inhibitor subunit A of Protobothrops flavoviridis (Habu).